A 1054-amino-acid polypeptide reads, in one-letter code: Putative disease resistance RPP13-like protein 1 (1054 aa).

Leucine-zipper regions lie at residues 9-20 and 39-53; these read LAAFLQALFQTL and LERL…TAVL. Residues 117-147 adopt a coiled-coil conformation; sequence DFLDGNSEHLETRLEKVTIRLERLASQRNIL. One can recognise an NB-ARC domain in the interval 152–462; sequence LTAMIPKQRL…AEGFLQQTRS (311 aa). An ATP-binding site is contributed by 203 to 210; sequence GIGGVGKT. 5 LRR repeats span residues 579–600, 603–624, 626–648, 650–672, and 676–697; these read RLRV…FFKN, HARF…LCYM, NLQT…ISNL, NLRY…GRLK, and TLTT…GGLH. The tract at residues 1018–1054 is disordered; sequence PQYHHPQFHLPRSNVSGSPKSHGSHRSYDSRSSSRYD. The span at 1043-1054 shows a compositional bias: basic and acidic residues; the sequence is RSYDSRSSSRYD.

The protein belongs to the disease resistance NB-LRR family. RPP13 subfamily.

Its function is as follows. Potential disease resistance protein. This Arabidopsis thaliana (Mouse-ear cress) protein is Putative disease resistance RPP13-like protein 1 (RPPL1).